The following is a 549-amino-acid chain: Protein X92 (549 aa).

This is Protein X92 from Trypanosoma brucei brucei.